A 345-amino-acid polypeptide reads, in one-letter code: Glycerol-3-phosphate dehydrogenase [NAD(P)+] (345 aa).

Residues S23, Y24, H44, and K118 each contribute to the NADPH site. K118, G147, and T149 together coordinate sn-glycerol 3-phosphate. A151 serves as a coordination point for NADPH. Residues K203, D256, S266, R267, and N268 each contribute to the sn-glycerol 3-phosphate site. The active-site Proton acceptor is K203. Residue R267 participates in NADPH binding. 2 residues coordinate NADPH: V291 and E293.

Belongs to the NAD-dependent glycerol-3-phosphate dehydrogenase family.

It localises to the cytoplasm. The catalysed reaction is sn-glycerol 3-phosphate + NAD(+) = dihydroxyacetone phosphate + NADH + H(+). It catalyses the reaction sn-glycerol 3-phosphate + NADP(+) = dihydroxyacetone phosphate + NADPH + H(+). It functions in the pathway membrane lipid metabolism; glycerophospholipid metabolism. Catalyzes the reduction of the glycolytic intermediate dihydroxyacetone phosphate (DHAP) to sn-glycerol 3-phosphate (G3P), the key precursor for phospholipid synthesis. The protein is Glycerol-3-phosphate dehydrogenase [NAD(P)+] of Vibrio parahaemolyticus serotype O3:K6 (strain RIMD 2210633).